The primary structure comprises 236 residues: Small ribosomal subunit protein uS2c (236 aa).

Component of the chloroplast small ribosomal subunit (SSU). Mature 70S chloroplast ribosomes of higher plants consist of a small (30S) and a large (50S) subunit. The 30S small subunit contains 1 molecule of ribosomal RNA (16S rRNA) and 24 different proteins. The 50S large subunit contains 3 rRNA molecules (23S, 5S and 4.5S rRNA) and 33 different proteins.

It localises to the plastid. Its subcellular location is the chloroplast. Component of the chloroplast ribosome (chloro-ribosome), a dedicated translation machinery responsible for the synthesis of chloroplast genome-encoded proteins, including proteins of the transcription and translation machinery and components of the photosynthetic apparatus. The protein is Small ribosomal subunit protein uS2c (rps2) of Spinacia oleracea (Spinach).